Reading from the N-terminus, the 323-residue chain is Transcriptional regulator protein Pur-beta-A (323 aa).

Disordered regions lie at residues 1–34 (MADG…QELA), 100–122 (SPEQ…PRRA), and 286–323 (QERQ…VDDD). Ala-2 is subject to N-acetylalanine. Residues 9–19 (ERGGSSGGPGG) show a composition bias toward gly residues. Over residues 24–34 (MSREQETQELA) the composition is skewed to basic and acidic residues. Positions 27–257 (EQETQELATK…LRVSEVKPSY (231 aa)) are DNA-binding. The span at 286 to 305 (QERQRDKMYERRGPGDRERS) shows a compositional bias: basic and acidic residues. Residues 313–323 (DDSETEDVDDD) show a composition bias toward acidic residues.

The protein belongs to the PUR DNA-binding protein family.

It localises to the nucleus. Functionally, transcriptional regulator which can act as an activator or a repressor. The protein is Transcriptional regulator protein Pur-beta-A (purb-a) of Xenopus laevis (African clawed frog).